A 255-amino-acid chain; its full sequence is Protein NEN4 (255 aa).

The Exonuclease domain occupies 11-174; it reads VFFDLETNVP…DDVRMNLEVL (164 aa). Asp14 and Glu16 together coordinate Mg(2+). Catalysis depends on His161, which acts as the Proton donor/acceptor. Asp166 is a Mg(2+) binding site.

It depends on Mg(2+) as a cofactor. In terms of tissue distribution, expressed in the sieve elements and phloem pole pericycle cells.

Its subcellular location is the nucleus. Probable exonuclease required for enuclation of sieve elements. This chain is Protein NEN4, found in Arabidopsis thaliana (Mouse-ear cress).